Here is a 309-residue protein sequence, read N- to C-terminus: UDP-N-acetylenolpyruvoylglucosamine reductase (309 aa).

The FAD-binding PCMH-type domain occupies 34 to 221; sequence RVGGPAQVLF…TAAREAAQPI (188 aa). The active site involves arginine 179. The active-site Proton donor is the serine 228. The active site involves glutamate 298.

The protein belongs to the MurB family. Requires FAD as cofactor.

The protein localises to the cytoplasm. The catalysed reaction is UDP-N-acetyl-alpha-D-muramate + NADP(+) = UDP-N-acetyl-3-O-(1-carboxyvinyl)-alpha-D-glucosamine + NADPH + H(+). Its pathway is cell wall biogenesis; peptidoglycan biosynthesis. Cell wall formation. In Methylorubrum extorquens (strain PA1) (Methylobacterium extorquens), this protein is UDP-N-acetylenolpyruvoylglucosamine reductase.